Consider the following 710-residue polypeptide: Choline transporter-like protein 4 (710 aa).

At 1–34 (MGGKQRDEDDEAYGKPVKYDPSFRGPIKNRSCTD) the chain is on the cytoplasmic side. The chain crosses the membrane as a helical span at residues 35-55 (VICCVLFLLFILGYIVVGIVA). At 56 to 229 (WLYGDPRQVL…KIFEDFAQSW (174 aa)) the chain is on the extracellular side. N-linked (GlcNAc...) asparagine glycans are attached at residues N69, N155, and N197. Residues 230-250 (YWILVALGVALVLSLLFILLL) traverse the membrane as a helical segment. Over 251-252 (RL) the chain is Cytoplasmic. A helical transmembrane segment spans residues 253–273 (VAGPLVLVLILGVLGVLAYGI). Over 274 to 309 (YYCWEEYRVLRDKGASISQLGFTTNLSAYQSVQETW) the chain is Extracellular. An N-linked (GlcNAc...) asparagine glycan is attached at N298. The chain crosses the membrane as a helical span at residues 310–330 (LAALIVLAVLEAILLLMLIFL). The Cytoplasmic portion of the chain corresponds to 331–358 (RQRIRIAIALLKEASKAVGQMMSTMFYP). A helical transmembrane segment spans residues 359–379 (LVTFVLLLICIAYWAMTALYL). Residues 380–455 (ATSGQPQYVL…GVLGLFWTLN (76 aa)) lie on the Extracellular side of the membrane. N393, N405, and N416 each carry an N-linked (GlcNAc...) asparagine glycan. A helical membrane pass occupies residues 456-476 (WVLALGQCVLAGAFASFYWAF). Residues 477 to 501 (HKPQDIPTFPLISAFIRTLRYHTGS) lie on the Cytoplasmic side of the membrane. The helical transmembrane segment at 502-522 (LAFGALILTLVQIARVILEYI) threads the bilayer. At 523–560 (DHKLRGVQNPVARCIMCCFKCCLWCLEKFIKFLNRNAY) the chain is on the extracellular side. Residues 561 to 581 (IMIAIYGKNFCVSAKNAFMLL) form a helical membrane-spanning segment. Residues 582–597 (MRNIVRVVVLDKVTDL) lie on the Cytoplasmic side of the membrane. A helical membrane pass occupies residues 598–618 (LLFFGKLLVVGGVGVLSFFFF). The Extracellular portion of the chain corresponds to 619 to 638 (SGRIPGLGKDFKSPHLNYYW). The chain crosses the membrane as a helical span at residues 639 to 659 (LPIMTSILGAYVIASGFFSVF). Over 660-710 (GMCVDTLFLCFLEDLERNNGSLDRPYYMSKSLLKILGKKNEAPPDNKKRKK) the chain is Cytoplasmic.

This sequence belongs to the CTL (choline transporter-like) family. In terms of processing, N-glycosylated; N-glycosylation of Asn-69, Asn-155 and Asn-393 is required for a proper thiamine pyrophosphate uptake. As to expression, highly expressed in colon, also detected in prostate, trachea and lung. Isoform 3 is also expressed in colon but a lower levels. In terms of tissue distribution, expressed in colon at low levels.

The protein localises to the membrane. It localises to the apical cell membrane. The catalysed reaction is choline(out) + n H(+)(in) = choline(in) + n H(+)(out). The enzyme catalyses thiamine diphosphate(out) = thiamine diphosphate(in). Functionally, choline transporter that plays a role in the choline-acetylcholine system and is required to the efferent innervation of hair cells in the olivocochlear bundle for the maintenance of physiological function of outer hair cells and the protection of hair cells from acoustic injury. Also described as a thiamine pyrophosphate transporter in colon, may mediate the absorption of microbiota-generated thiamine pyrophosphate and contribute to host thiamine (vitamin B1) homeostasis. In terms of biological role, also has thiamine pyrophosphate transporter activity. This Homo sapiens (Human) protein is Choline transporter-like protein 4.